The primary structure comprises 366 residues: Chorismate synthase (366 aa).

Arg-48 serves as a coordination point for NADP(+). Residues 125–127 (RSS), Gly-283, 298–302 (KPTPS), and Arg-324 each bind FMN.

Belongs to the chorismate synthase family. Homotetramer. FMNH2 serves as cofactor.

It carries out the reaction 5-O-(1-carboxyvinyl)-3-phosphoshikimate = chorismate + phosphate. It participates in metabolic intermediate biosynthesis; chorismate biosynthesis; chorismate from D-erythrose 4-phosphate and phosphoenolpyruvate: step 7/7. Catalyzes the anti-1,4-elimination of the C-3 phosphate and the C-6 proR hydrogen from 5-enolpyruvylshikimate-3-phosphate (EPSP) to yield chorismate, which is the branch point compound that serves as the starting substrate for the three terminal pathways of aromatic amino acid biosynthesis. This reaction introduces a second double bond into the aromatic ring system. This Lachnospira eligens (strain ATCC 27750 / DSM 3376 / VPI C15-48 / C15-B4) (Eubacterium eligens) protein is Chorismate synthase.